A 647-amino-acid polypeptide reads, in one-letter code: UvrABC system protein C (647 aa).

A GIY-YIG domain is found at Val-16–Ile-95. In terms of domain architecture, UVR spans Asp-208–Ala-243.

It belongs to the UvrC family. In terms of assembly, interacts with UvrB in an incision complex.

Its subcellular location is the cytoplasm. Its function is as follows. The UvrABC repair system catalyzes the recognition and processing of DNA lesions. UvrC both incises the 5' and 3' sides of the lesion. The N-terminal half is responsible for the 3' incision and the C-terminal half is responsible for the 5' incision. The sequence is that of UvrABC system protein C from Mycobacterium leprae (strain Br4923).